We begin with the raw amino-acid sequence, 131 residues long: Peptide methionine sulfoxide reductase MsrB (131 aa).

Positions 8-130 (LEEWKQMLDP…NSVCLDLVPR (123 aa)) constitute a MsrB domain. The Zn(2+) site is built by cysteine 47, cysteine 50, cysteine 96, and cysteine 99. Catalysis depends on cysteine 119, which acts as the Nucleophile.

It belongs to the MsrB Met sulfoxide reductase family. It depends on Zn(2+) as a cofactor.

It catalyses the reaction L-methionyl-[protein] + [thioredoxin]-disulfide + H2O = L-methionyl-(R)-S-oxide-[protein] + [thioredoxin]-dithiol. This Pseudomonas syringae pv. syringae (strain B728a) protein is Peptide methionine sulfoxide reductase MsrB.